The primary structure comprises 219 residues: Endonuclease III (219 aa).

In terms of domain architecture, HhH spans 117–136; sequence MEELLTLPGVARKTANVVLA. Residues Cys197, Cys204, Cys207, and Cys213 each coordinate [4Fe-4S] cluster.

It belongs to the Nth/MutY family. It depends on [4Fe-4S] cluster as a cofactor.

The catalysed reaction is 2'-deoxyribonucleotide-(2'-deoxyribose 5'-phosphate)-2'-deoxyribonucleotide-DNA = a 3'-end 2'-deoxyribonucleotide-(2,3-dehydro-2,3-deoxyribose 5'-phosphate)-DNA + a 5'-end 5'-phospho-2'-deoxyribonucleoside-DNA + H(+). Its function is as follows. DNA repair enzyme that has both DNA N-glycosylase activity and AP-lyase activity. The DNA N-glycosylase activity releases various damaged pyrimidines from DNA by cleaving the N-glycosidic bond, leaving an AP (apurinic/apyrimidinic) site. The AP-lyase activity cleaves the phosphodiester bond 3' to the AP site by a beta-elimination, leaving a 3'-terminal unsaturated sugar and a product with a terminal 5'-phosphate. The protein is Endonuclease III of Synechocystis sp. (strain ATCC 27184 / PCC 6803 / Kazusa).